Here is a 325-residue protein sequence, read N- to C-terminus: Elongation factor P--(R)-beta-lysine ligase (325 aa).

A substrate-binding site is contributed by 76 to 78 (SPE). Residues 100–102 (RNE) and Asn-109 each bind ATP. Tyr-118 is a binding site for substrate. An ATP-binding site is contributed by 244 to 245 (EL). Glu-251 contributes to the substrate binding site. Gly-300 serves as a coordination point for ATP.

It belongs to the class-II aminoacyl-tRNA synthetase family. EpmA subfamily. As to quaternary structure, homodimer.

The enzyme catalyses D-beta-lysine + L-lysyl-[protein] + ATP = N(6)-((3R)-3,6-diaminohexanoyl)-L-lysyl-[protein] + AMP + diphosphate + H(+). Its function is as follows. With EpmB is involved in the beta-lysylation step of the post-translational modification of translation elongation factor P (EF-P). Catalyzes the ATP-dependent activation of (R)-beta-lysine produced by EpmB, forming a lysyl-adenylate, from which the beta-lysyl moiety is then transferred to the epsilon-amino group of a conserved specific lysine residue in EF-P. This is Elongation factor P--(R)-beta-lysine ligase from Klebsiella pneumoniae subsp. pneumoniae (strain ATCC 700721 / MGH 78578).